We begin with the raw amino-acid sequence, 549 residues long: Dihydroxy-acid dehydratase (549 aa).

Position 78 (Asp78) interacts with Mg(2+). A [2Fe-2S] cluster-binding site is contributed by Cys119. Mg(2+) is bound by residues Asp120 and Lys121. The residue at position 121 (Lys121) is an N6-carboxylysine. Residue Cys191 participates in [2Fe-2S] cluster binding. Residue Glu441 coordinates Mg(2+). Catalysis depends on Ser466, which acts as the Proton acceptor.

Belongs to the IlvD/Edd family. As to quaternary structure, homodimer. The cofactor is [2Fe-2S] cluster. It depends on Mg(2+) as a cofactor.

The enzyme catalyses (2R)-2,3-dihydroxy-3-methylbutanoate = 3-methyl-2-oxobutanoate + H2O. It catalyses the reaction (2R,3R)-2,3-dihydroxy-3-methylpentanoate = (S)-3-methyl-2-oxopentanoate + H2O. It participates in amino-acid biosynthesis; L-isoleucine biosynthesis; L-isoleucine from 2-oxobutanoate: step 3/4. The protein operates within amino-acid biosynthesis; L-valine biosynthesis; L-valine from pyruvate: step 3/4. Functionally, functions in the biosynthesis of branched-chain amino acids. Catalyzes the dehydration of (2R,3R)-2,3-dihydroxy-3-methylpentanoate (2,3-dihydroxy-3-methylvalerate) into 2-oxo-3-methylpentanoate (2-oxo-3-methylvalerate) and of (2R)-2,3-dihydroxy-3-methylbutanoate (2,3-dihydroxyisovalerate) into 2-oxo-3-methylbutanoate (2-oxoisovalerate), the penultimate precursor to L-isoleucine and L-valine, respectively. The chain is Dihydroxy-acid dehydratase from Methanobrevibacter smithii (strain ATCC 35061 / DSM 861 / OCM 144 / PS).